Here is a 152-residue protein sequence, read N- to C-terminus: Calcium-binding protein SPEC 1A (152 aa).

EF-hand domains are found at residues 10–45, 46–81, 84–119, and 120–152; these read EEVT…TGKS, YTDK…QMVK, WKEE…SKPP, and MKRK…IKSC. Positions 23, 25, 27, 29, 34, 59, 61, 63, 65, 70, 97, 99, 101, 103, 108, 133, 135, 137, 139, and 144 each coordinate Ca(2+). Residues 95 to 121 are disordered; it reads DMDKDGNGSLSPQELREALSASKPPMK.

Found in cell lineages giving rise to the aboral ectoderm, a squamous epithelium covering the surface of the late stage embryo and larva.

Its function is as follows. Calcium-binding protein involved in larval development and metamorphosis. Likely to function as calcium buffers mediating the transport of calcium from the sea water to the blastocoel where calcium is required for skeleton formation. This chain is Calcium-binding protein SPEC 1A (SPEC1), found in Strongylocentrotus purpuratus (Purple sea urchin).